We begin with the raw amino-acid sequence, 151 residues long: Ribosome maturation factor RimP (151 aa).

It belongs to the RimP family.

The protein localises to the cytoplasm. Functionally, required for maturation of 30S ribosomal subunits. The chain is Ribosome maturation factor RimP from Thermoanaerobacter pseudethanolicus (strain ATCC 33223 / 39E) (Clostridium thermohydrosulfuricum).